The following is a 100-amino-acid chain: Urease subunit gamma (100 aa).

Belongs to the urease gamma subunit family. Heterotrimer of UreA (gamma), UreB (beta) and UreC (alpha) subunits. Three heterotrimers associate to form the active enzyme.

The protein resides in the cytoplasm. It carries out the reaction urea + 2 H2O + H(+) = hydrogencarbonate + 2 NH4(+). Its pathway is nitrogen metabolism; urea degradation; CO(2) and NH(3) from urea (urease route): step 1/1. This is Urease subunit gamma from Teredinibacter turnerae (strain ATCC 39867 / T7901).